The following is a 532-amino-acid chain: Germ cell nuclear acidic-1 protein (532 aa).

Positions 1-10 (MPTPFRDLHN) are enriched in basic and acidic residues. Disordered regions lie at residues 1-50 (MPTP…EPIS), 84-181 (REAP…GNFE), and 213-253 (YISE…DRKQ). Over residues 14–32 (ASASSYETAWSSSFSSRRS) the composition is skewed to low complexity. Basic and acidic residues-rich tracts occupy residues 39–48 (SNLKEIKDEP), 94–107 (LLQKIEKEDERDML), and 124–133 (KPKEVKKALK). A compositionally biased stretch (acidic residues) spans 213-235 (YISEESSEEESEEEEEDVDDEEY). A compositionally biased stretch (basic and acidic residues) spans 236–251 (RESSPEVEAKISYSDR). The 91-residue stretch at 308-398 (RRIFSAIPSE…GARCSSVFKS (91 aa)) folds into the SprT-like domain. The interval 468 to 489 (AKPVGPILSNSSKPSPPAPRRI) is disordered.

The protein belongs to the serine-aspartate repeat-containing protein (SDr) family. In terms of assembly, interacts with top-2; this interaction allows the resolution of topoisomerase II (top-2) DNA-protein cross-links. Mainly expressed in germ cells and early embryonic, proliferating cells.

The protein localises to the chromosome. Functionally, may play a role in DNA-protein cross-links (DPCs) clearance through a SUMO-dependent recruitment to sites of DPCs, ensuring the genomic stability by protecting germ cells and early embryos from various sources of damage. May resolve the topoisomerase II (top-2) DPCs. Limits replication stress and DNA double-strand breaks. In Caenorhabditis elegans, this protein is Germ cell nuclear acidic-1 protein.